We begin with the raw amino-acid sequence, 287 residues long: Shikimate dehydrogenase (NADP(+)) (287 aa).

Residues Ser-21–Ser-23 and Thr-68 each bind shikimate. The active-site Proton acceptor is Lys-72. Shikimate-binding residues include Asn-93 and Asp-109. NADP(+) is bound by residues Gly-133–Ala-137, Asn-157–Lys-162, and Met-226. Tyr-228 contacts shikimate. Gly-250 serves as a coordination point for NADP(+).

The protein belongs to the shikimate dehydrogenase family. Homodimer.

It catalyses the reaction shikimate + NADP(+) = 3-dehydroshikimate + NADPH + H(+). It participates in metabolic intermediate biosynthesis; chorismate biosynthesis; chorismate from D-erythrose 4-phosphate and phosphoenolpyruvate: step 4/7. Functionally, involved in the biosynthesis of the chorismate, which leads to the biosynthesis of aromatic amino acids. Catalyzes the reversible NADPH linked reduction of 3-dehydroshikimate (DHSA) to yield shikimate (SA). This chain is Shikimate dehydrogenase (NADP(+)), found in Shewanella oneidensis (strain ATCC 700550 / JCM 31522 / CIP 106686 / LMG 19005 / NCIMB 14063 / MR-1).